Consider the following 298-residue polypeptide: NADH-cytochrome b5 reductase 2 (298 aa).

The chain crosses the membrane as a helical span at residues 13–33; sequence FLPFAIGAVAVTAGALYLNGW. The 105-residue stretch at 48 to 152 folds into the FAD-binding FR-type domain; it reads RKWIDLELEK…QGPIPKWQWK (105 aa). An FAD-binding site is contributed by 155-190; the sequence is SFDTITLLGGGTGITPLYQLVHHITQNKEDKTKINL.

Belongs to the flavoprotein pyridine nucleotide cytochrome reductase family. The cofactor is FAD.

Its subcellular location is the mitochondrion outer membrane. The enzyme catalyses 2 Fe(III)-[cytochrome b5] + NADH = 2 Fe(II)-[cytochrome b5] + NAD(+) + H(+). Functionally, may mediate the reduction of outer membrane cytochrome b5. This chain is NADH-cytochrome b5 reductase 2 (MCR1), found in Candida glabrata (strain ATCC 2001 / BCRC 20586 / JCM 3761 / NBRC 0622 / NRRL Y-65 / CBS 138) (Yeast).